We begin with the raw amino-acid sequence, 377 residues long: tRNA 2-selenouridine synthase (377 aa).

The Rhodanese domain occupies 18–141 (ITRGVTLIDV…LRQEAMDATD (124 aa)). Cys-101 functions as the S-selanylcysteine intermediate in the catalytic mechanism.

Belongs to the SelU family. In terms of assembly, monomer.

The enzyme catalyses 5-methylaminomethyl-2-thiouridine(34) in tRNA + selenophosphate + (2E)-geranyl diphosphate + H2O + H(+) = 5-methylaminomethyl-2-selenouridine(34) in tRNA + (2E)-thiogeraniol + phosphate + diphosphate. It carries out the reaction 5-methylaminomethyl-2-thiouridine(34) in tRNA + (2E)-geranyl diphosphate = 5-methylaminomethyl-S-(2E)-geranyl-thiouridine(34) in tRNA + diphosphate. The catalysed reaction is 5-methylaminomethyl-S-(2E)-geranyl-thiouridine(34) in tRNA + selenophosphate + H(+) = 5-methylaminomethyl-2-(Se-phospho)selenouridine(34) in tRNA + (2E)-thiogeraniol. It catalyses the reaction 5-methylaminomethyl-2-(Se-phospho)selenouridine(34) in tRNA + H2O = 5-methylaminomethyl-2-selenouridine(34) in tRNA + phosphate. Its function is as follows. Involved in the post-transcriptional modification of the uridine at the wobble position (U34) of tRNA(Lys), tRNA(Glu) and tRNA(Gln). Catalyzes the conversion of 2-thiouridine (S2U-RNA) to 2-selenouridine (Se2U-RNA). Acts in a two-step process involving geranylation of 2-thiouridine (S2U) to S-geranyl-2-thiouridine (geS2U) and subsequent selenation of the latter derivative to 2-selenouridine (Se2U) in the tRNA chain. This chain is tRNA 2-selenouridine synthase, found in Cronobacter sakazakii (strain ATCC BAA-894) (Enterobacter sakazakii).